The sequence spans 91 residues: Small ribosomal subunit protein uS19 (91 aa).

It belongs to the universal ribosomal protein uS19 family.

Functionally, protein S19 forms a complex with S13 that binds strongly to the 16S ribosomal RNA. The protein is Small ribosomal subunit protein uS19 of Laribacter hongkongensis (strain HLHK9).